The following is an 888-amino-acid chain: MKILKSLVLLVLFIVMPAKAHDAFSWMSTSFSGLKGLFGCLEVPEFTSFQESNIGINLSKAGAWQSTGHTVEKGKLLKINWSIAGVTTEPRKYLVLYRIDPRFSTPQVFIKTYNYSKLQFEALGFPRFVTNSNSSIPGAIPPDKDLDALSFTKMSDSIKYFNYSKNNVKIEVKAGDVVNISLVGKDNFFTSNTLDNILTEELDSSIFAPSALYTQSNLGNFDNRIIYASAKEVCDIIDAARDPDKPSGCSGTGAATKYKSINSNEALVGKPMMIGAIHNFMGLINSCPEHSGINTRPACYYDQGRGMIIKVGGQVIKERDQSFVKSGRNSFIYYQATRDGIMNFTSDWQVSNMFNNSVLMSDWIRRFLNYPSFIDYINQNDWSANFLYFGRYSMIVEIGNGANSISADVQQNISLEYLITYDGTLPDPSIRGTPVDYNFAADAPKDGYLWLRVVNPNSNIQGVVSVNYANYTGTTWFSDIVYNGAIKPITDQFRTFSKNFYIKLIKNSAVQNIVKAALTLYVIIFGLMFVAGALKLTAIEVITRICKIAIVAFLIREESWNFFNTYFFSVFTDGINFFITNVVGATSSRSNIFGFIDPIFDKYTNGRIWGLLFIELLQIHNGLAFIAIITIYSLITYFRAILEVIIGYVIAFIGITVMISLAPFFIILMLFEKTKSLFDNWISTLLSYVVQPTILLIFFLLIDQVLSEQLLKVVVRACWDTLIPIKIGLDLTNLGIPINFSFTLPFLPGIPFYVPDVPEISRSNIFTNNANTFLVLFTTSLLFYSYCLMSYGLVTFVNIVVGMLTNVTPARISGNYQARSDPVGAVMQDIGSVTTPMKNASMVPARVFKDKIIDQNYKARKSEGGVEFTNKFFSERNDITKKEEGARE.

A signal peptide spans 1 to 20 (MKILKSLVLLVLFIVMPAKA). The next 6 membrane-spanning stretches (helical) occupy residues 513-533 (IVKA…VAGA), 565-585 (TYFF…VVGA), 611-631 (LLFI…IITI), 649-669 (VIAF…IILM), 682-702 (ISTL…FLLI), and 781-801 (LLFY…NIVV).

The protein belongs to the TrbL/VirB6 family.

The protein localises to the cell membrane. This is an uncharacterized protein from Rickettsia prowazekii (strain Madrid E).